A 283-amino-acid polypeptide reads, in one-letter code: 4-diphosphocytidyl-2-C-methyl-D-erythritol kinase (283 aa).

K10 is a catalytic residue. 99-109 (PMGGGLGGGSS) contacts ATP. The active site involves D141.

This sequence belongs to the GHMP kinase family. IspE subfamily. In terms of assembly, homodimer.

It carries out the reaction 4-CDP-2-C-methyl-D-erythritol + ATP = 4-CDP-2-C-methyl-D-erythritol 2-phosphate + ADP + H(+). Its pathway is isoprenoid biosynthesis; isopentenyl diphosphate biosynthesis via DXP pathway; isopentenyl diphosphate from 1-deoxy-D-xylulose 5-phosphate: step 3/6. Functionally, catalyzes the phosphorylation of the position 2 hydroxy group of 4-diphosphocytidyl-2C-methyl-D-erythritol. In Shigella boydii serotype 18 (strain CDC 3083-94 / BS512), this protein is 4-diphosphocytidyl-2-C-methyl-D-erythritol kinase.